The primary structure comprises 232 residues: 7-cyano-7-deazaguanine synthase (232 aa).

8 to 18 (LSGGLDSATVL) provides a ligand contact to ATP. Residues Cys188, Cys198, Cys201, and Cys204 each contribute to the Zn(2+) site.

The protein belongs to the QueC family. Zn(2+) serves as cofactor.

It catalyses the reaction 7-carboxy-7-deazaguanine + NH4(+) + ATP = 7-cyano-7-deazaguanine + ADP + phosphate + H2O + H(+). It functions in the pathway purine metabolism; 7-cyano-7-deazaguanine biosynthesis. Functionally, catalyzes the ATP-dependent conversion of 7-carboxy-7-deazaguanine (CDG) to 7-cyano-7-deazaguanine (preQ(0)). The sequence is that of 7-cyano-7-deazaguanine synthase from Nitrosospira multiformis (strain ATCC 25196 / NCIMB 11849 / C 71).